The sequence spans 78 residues: Large ribosomal subunit protein bL28 (78 aa).

Residues 1 to 20 (MSRVCQVTGKRPVTGNNRSH) form a disordered region.

The protein belongs to the bacterial ribosomal protein bL28 family.

This chain is Large ribosomal subunit protein bL28, found in Photobacterium profundum (strain SS9).